A 429-amino-acid chain; its full sequence is Enolase (429 aa).

Gln-169 provides a ligand contact to (2R)-2-phosphoglycerate. Glu-211 serves as the catalytic Proton donor. The Mg(2+) site is built by Asp-248, Glu-289, and Asp-316. 4 residues coordinate (2R)-2-phosphoglycerate: Lys-341, Arg-370, Ser-371, and Lys-392. Catalysis depends on Lys-341, which acts as the Proton acceptor.

Belongs to the enolase family. Mg(2+) is required as a cofactor.

Its subcellular location is the cytoplasm. The protein resides in the secreted. It is found in the cell surface. It catalyses the reaction (2R)-2-phosphoglycerate = phosphoenolpyruvate + H2O. The protein operates within carbohydrate degradation; glycolysis; pyruvate from D-glyceraldehyde 3-phosphate: step 4/5. Catalyzes the reversible conversion of 2-phosphoglycerate (2-PG) into phosphoenolpyruvate (PEP). It is essential for the degradation of carbohydrates via glycolysis. The chain is Enolase from Anaplasma phagocytophilum (strain HZ).